Consider the following 214-residue polypeptide: Nascent polypeptide-associated complex subunit alpha (214 aa).

2 disordered regions span residues 1-57 and 119-179; these read MSNP…NEKK and ASAA…EDKD. Residues 22–38 show a composition bias toward acidic residues; it reads AEDEGSDSSDSEGEGEV. The NAC-A/B domain occupies 52–117; it reads SRNEKKARKS…AKIEDLNSQA (66 aa). Residues 119 to 128 show a composition bias toward low complexity; sequence ASAAAQLAAQ. Positions 129-159 are enriched in basic and acidic residues; it reads ESHDHAGHDHSGHDHSHDHGKGKAVDTGDEK. Positions 160–171 are enriched in acidic residues; the sequence is KEEEEDDTEEVD. Residues 175 to 214 enclose the UBA domain; the sequence is LEDKDIELVMTQASVSRNKAVKALKENDNDIVNSIMALSI.

It belongs to the NAC-alpha family. In terms of assembly, part of the nascent polypeptide-associated complex (NAC), consisting of EGD2 and EGD1. NAC associates with ribosomes via EGD1.

It localises to the cytoplasm. It is found in the nucleus. In terms of biological role, component of the nascent polypeptide-associated complex (NAC), a dynamic component of the ribosomal exit tunnel, protecting the emerging polypeptides from interaction with other cytoplasmic proteins to ensure appropriate nascent protein targeting. The NAC complex also promotes mitochondrial protein import by enhancing productive ribosome interactions with the outer mitochondrial membrane and blocks the inappropriate interaction of ribosomes translating non-secretory nascent polypeptides with translocation sites in the membrane of the endoplasmic reticulum. EGD2 may also be involved in transcription regulation. This Sclerotinia sclerotiorum (strain ATCC 18683 / 1980 / Ss-1) (White mold) protein is Nascent polypeptide-associated complex subunit alpha (egd2).